Here is a 175-residue protein sequence, read N- to C-terminus: Alkyl hydroperoxide reductase AhpD (175 aa).

Cysteine 130 functions as the Proton donor in the catalytic mechanism. Cysteine 130 and cysteine 133 form a disulfide bridge. Cysteine 133 acts as the Cysteine sulfenic acid (-SOH) intermediate in catalysis.

Belongs to the AhpD family. In terms of assembly, homotrimer.

It catalyses the reaction N(6)-[(R)-dihydrolipoyl]-L-lysyl-[lipoyl-carrier protein] + a hydroperoxide = N(6)-[(R)-lipoyl]-L-lysyl-[lipoyl-carrier protein] + an alcohol + H2O. Functionally, antioxidant protein with alkyl hydroperoxidase activity. Required for the reduction of the AhpC active site cysteine residues and for the regeneration of the AhpC enzyme activity. The sequence is that of Alkyl hydroperoxide reductase AhpD from Mycobacteroides abscessus (strain ATCC 19977 / DSM 44196 / CCUG 20993 / CIP 104536 / JCM 13569 / NCTC 13031 / TMC 1543 / L948) (Mycobacterium abscessus).